Consider the following 33-residue polypeptide: Kappa-sparatoxin-Hv1a (33 aa).

Disulfide bonds link cysteine 2–cysteine 17, cysteine 9–cysteine 22, and cysteine 16–cysteine 27. Tryptophan 33 bears the Tryptophan amide mark.

As to expression, expressed by the venom gland.

Its subcellular location is the secreted. In terms of biological role, blocks transient outward voltage-gated potassium channels in rat ventricular myocytes (thus prolonging action-potential duration) and rat Kv4.2/KCNA4 channels expressed in Xenopus oocytes. Is also a weak blocker of calcium channels in rat cerebellar granule cells. This is Kappa-sparatoxin-Hv1a from Heteropoda venatoria (Brown huntsman spider).